The chain runs to 506 residues: Galactose/methyl galactoside import ATP-binding protein MglA (506 aa).

2 ABC transporter domains span residues Leu-14–Ser-249 and Val-264–Leu-506. Position 46–53 (Gly-46–Ser-53) interacts with ATP.

The protein belongs to the ABC transporter superfamily. Galactose/methyl galactoside importer (TC 3.A.1.2.3) family. As to quaternary structure, the complex is composed of one ATP-binding protein (MglA), two transmembrane proteins (MglC) and a solute-binding protein (MglB).

Its subcellular location is the cell inner membrane. It carries out the reaction D-galactose(out) + ATP + H2O = D-galactose(in) + ADP + phosphate + H(+). It catalyses the reaction methyl beta-D-galactoside(out) + ATP + H2O = methyl beta-D-galactoside(in) + ADP + phosphate + H(+). Part of the ABC transporter complex MglABC involved in galactose/methyl galactoside import. Responsible for energy coupling to the transport system. This is Galactose/methyl galactoside import ATP-binding protein MglA from Yersinia pestis bv. Antiqua (strain Antiqua).